The chain runs to 332 residues: MIDSQLPLTDIHRHLDGNIRAQTILDLGREFNLTLPATTLAALRPHVQVIEAEPDLVSFLNKLDWGVKVLGSLDACRRVALENVEDAARAGIHYAELRFSPGYMAMTHGLPVAGVVEAVIDGIRAGCAAHNIDVRLIGIMSRTFGEDACLRELDGLLAHRDGITALDLAGDELGFPGRRFLSHFNRARDAGLRITVHAGEAAGAESIWQAIRELGAERIGHGVKAVEDPALMDFLAQEGIGIESCLTSNIQTSTVATLADHPLKTFLNHGILATINTDDPAVQGIEIEHEYHVAAPAAGLSVQQMRVAQENGLKIAFLSEEEKAAVRARLAA.

Residues histidine 12 and histidine 14 each contribute to the Zn(2+) site. Substrate contacts are provided by histidine 14, aspartate 16, and glycine 170. Histidine 197 contributes to the Zn(2+) binding site. Glutamate 200 acts as the Proton donor in catalysis. Aspartate 278 contacts Zn(2+). Aspartate 279 serves as a coordination point for substrate.

It belongs to the metallo-dependent hydrolases superfamily. Adenosine and AMP deaminases family. Adenosine deaminase subfamily. Zn(2+) serves as cofactor.

It catalyses the reaction adenosine + H2O + H(+) = inosine + NH4(+). The catalysed reaction is 2'-deoxyadenosine + H2O + H(+) = 2'-deoxyinosine + NH4(+). In terms of biological role, catalyzes the hydrolytic deamination of adenosine and 2-deoxyadenosine. The protein is Adenosine deaminase of Erwinia tasmaniensis (strain DSM 17950 / CFBP 7177 / CIP 109463 / NCPPB 4357 / Et1/99).